We begin with the raw amino-acid sequence, 338 residues long: Anthranilate phosphoribosyltransferase (338 aa).

5-phospho-alpha-D-ribose 1-diphosphate contacts are provided by residues Gly81, 84–85 (GD), Thr89, 91–94 (NIST), 109–117 (KHGNRALSS), and Ala121. Gly81 is an anthranilate binding site. A Mg(2+)-binding site is contributed by Ser93. Asn112 contributes to the anthranilate binding site. Arg167 serves as a coordination point for anthranilate. 2 residues coordinate Mg(2+): Asp225 and Glu226.

Belongs to the anthranilate phosphoribosyltransferase family. In terms of assembly, homodimer. Requires Mg(2+) as cofactor.

It catalyses the reaction N-(5-phospho-beta-D-ribosyl)anthranilate + diphosphate = 5-phospho-alpha-D-ribose 1-diphosphate + anthranilate. It functions in the pathway amino-acid biosynthesis; L-tryptophan biosynthesis; L-tryptophan from chorismate: step 2/5. Its function is as follows. Catalyzes the transfer of the phosphoribosyl group of 5-phosphorylribose-1-pyrophosphate (PRPP) to anthranilate to yield N-(5'-phosphoribosyl)-anthranilate (PRA). This Rhizobium johnstonii (strain DSM 114642 / LMG 32736 / 3841) (Rhizobium leguminosarum bv. viciae) protein is Anthranilate phosphoribosyltransferase.